A 409-amino-acid polypeptide reads, in one-letter code: Arginine deiminase (409 aa).

The active-site Amidino-cysteine intermediate is cysteine 399.

The protein belongs to the arginine deiminase family.

Its subcellular location is the cytoplasm. It catalyses the reaction L-arginine + H2O = L-citrulline + NH4(+). The protein operates within amino-acid degradation; L-arginine degradation via ADI pathway; carbamoyl phosphate from L-arginine: step 1/2. The sequence is that of Arginine deiminase from Streptococcus pneumoniae (strain 70585).